The primary structure comprises 624 residues: DNA mismatch repair protein MutL (624 aa).

It belongs to the DNA mismatch repair MutL/HexB family.

In terms of biological role, this protein is involved in the repair of mismatches in DNA. It is required for dam-dependent methyl-directed DNA mismatch repair. May act as a 'molecular matchmaker', a protein that promotes the formation of a stable complex between two or more DNA-binding proteins in an ATP-dependent manner without itself being part of a final effector complex. In Chlorobium phaeobacteroides (strain DSM 266 / SMG 266 / 2430), this protein is DNA mismatch repair protein MutL.